Reading from the N-terminus, the 547-residue chain is Cytochrome P450 monooxygenase 128 (547 aa).

Residues 9–25 (IPWAAGATLLAWAAYKI) form a helical membrane-spanning segment. Residues Asn336 and Asn438 are each glycosylated (N-linked (GlcNAc...) asparagine). Cys483 is a binding site for heme.

Belongs to the cytochrome P450 family. It depends on heme as a cofactor.

The protein localises to the membrane. It functions in the pathway secondary metabolite biosynthesis. Cytochrome P450 monooxygenase that is able to use 7-ethoxycoumarin and testosterone as substrates for oxidation. In Postia placenta (strain ATCC 44394 / Madison 698-R) (Brown rot fungus), this protein is Cytochrome P450 monooxygenase 128.